Reading from the N-terminus, the 649-residue chain is Archaeal Lon protease (649 aa).

Residues 1–114 lie on the Cytoplasmic side of the membrane; that stretch reads MFSIKFKTTE…KLDFKAPSST (114 aa). 47 to 54 provides a ligand contact to ATP; that stretch reads GDPGVGKS. A helical transmembrane segment spans residues 115–135; that stretch reads TLLLIMIGAILLSEYLLKYLP. The Extracellular portion of the chain corresponds to 136–138; it reads QNY. Residues 139–159 form a helical membrane-spanning segment; that stretch reads LLAAVTITALIVLIFGFVIIL. Residues 160 to 649 lie on the Cytoplasmic side of the membrane; sequence TSIMGASRAS…DNRGGAERFN (490 aa). The 184-residue stretch at 456–639 folds into the Lon proteolytic domain; the sequence is EPKVGVIYGL…DEIVPLVFDL (184 aa). Residues S550 and K593 contribute to the active site.

It belongs to the peptidase S16 family. Archaeal LonB subfamily. In terms of assembly, homohexamer. Organized in a ring with a central cavity.

The protein resides in the cell membrane. ATP-dependent serine protease that mediates the selective degradation of mutant and abnormal proteins as well as certain short-lived regulatory proteins. Degrades polypeptides processively. The protein is Archaeal Lon protease of Methanocaldococcus jannaschii (strain ATCC 43067 / DSM 2661 / JAL-1 / JCM 10045 / NBRC 100440) (Methanococcus jannaschii).